The following is a 476-amino-acid chain: Calcium/calmodulin-dependent protein kinase type 1G (476 aa).

One can recognise a Protein kinase domain in the interval 23 to 277; sequence FIFMEVLGSG…CEKALSHPWI (255 aa). Residues 29-37 and lysine 52 contribute to the ATP site; that span reads LGSGAFSEV. The active-site Proton acceptor is the aspartate 143. An autoinhibitory domain region spans residues 277-317; it reads IDGNTALHRDIYPSVSLQIQKNFAKSKWRQAFNAAAVVHHM. The calmodulin-binding stretch occupies residues 297 to 318; that stretch reads KNFAKSKWRQAFNAAAVVHHMR. The tract at residues 325-352 is disordered; sequence HSPGVRPEVENRPPETQASETSRPSSPE. A compositionally biased stretch (polar residues) spans 338-352; the sequence is PETQASETSRPSSPE.

The protein belongs to the protein kinase superfamily. CAMK Ser/Thr protein kinase family. CaMK subfamily. Post-translationally, may be prenylated on Cys-473. Mainly expressed in brain with small amounts in skeletal muscles, kidney, spleen and liver. Strongly expressed in forebrain neocortex, striatum and limbic system.

It localises to the cytoplasm. The protein localises to the golgi apparatus membrane. Its subcellular location is the cell membrane. It carries out the reaction L-seryl-[protein] + ATP = O-phospho-L-seryl-[protein] + ADP + H(+). The catalysed reaction is L-threonyl-[protein] + ATP = O-phospho-L-threonyl-[protein] + ADP + H(+). Its activity is regulated as follows. Activated by Ca(2+)/calmodulin. Binding of calmodulin is thought to result in a conformational change and leads to activation through phosphorylation by CAMKK1. Functionally, calcium/calmodulin-dependent protein kinase belonging to a proposed calcium-triggered signaling cascade. In vitro phosphorylates transcription factor CREB1. This chain is Calcium/calmodulin-dependent protein kinase type 1G (CAMK1G), found in Homo sapiens (Human).